A 39-amino-acid chain; its full sequence is Potassium channel toxin alpha-KTx 2.23 (39 aa).

Disulfide bonds link cysteine 7/cysteine 29, cysteine 13/cysteine 34, and cysteine 17/cysteine 36.

Expressed by the venom gland.

The protein localises to the secreted. Its function is as follows. Blocks human voltage-gated potassium (Kv) channels Kv1.1/KCNA1, Kv1.2/KCNA2 and Kv1.3/KCNA3. The protein is Potassium channel toxin alpha-KTx 2.23 of Centruroides bonito (Scorpion).